Reading from the N-terminus, the 346-residue chain is Glycerol-3-phosphate dehydrogenase [NAD(P)+] (346 aa).

NADPH is bound by residues S15, W16, R36, and K110. Sn-glycerol 3-phosphate contacts are provided by K110, G139, and S141. NADPH is bound at residue A143. The sn-glycerol 3-phosphate site is built by K194, D247, S257, R258, and N259. Catalysis depends on K194, which acts as the Proton acceptor. Residue R258 coordinates NADPH. The NADPH site is built by V282 and E284.

It belongs to the NAD-dependent glycerol-3-phosphate dehydrogenase family.

The protein resides in the cytoplasm. It carries out the reaction sn-glycerol 3-phosphate + NAD(+) = dihydroxyacetone phosphate + NADH + H(+). The catalysed reaction is sn-glycerol 3-phosphate + NADP(+) = dihydroxyacetone phosphate + NADPH + H(+). Its pathway is membrane lipid metabolism; glycerophospholipid metabolism. In terms of biological role, catalyzes the reduction of the glycolytic intermediate dihydroxyacetone phosphate (DHAP) to sn-glycerol 3-phosphate (G3P), the key precursor for phospholipid synthesis. The protein is Glycerol-3-phosphate dehydrogenase [NAD(P)+] of Xylella fastidiosa (strain Temecula1 / ATCC 700964).